Here is a 341-residue protein sequence, read N- to C-terminus: HTH-type transcriptional repressor PurR (341 aa).

Residues Ala-2–Val-56 enclose the HTH lacI-type domain. The H-T-H motif DNA-binding region spans Ile-4 to Asn-23. The DNA-binding element occupies Ser-48 to Val-56. Tyr-73, Arg-190, Thr-192, Phe-221, and Asp-275 together coordinate hypoxanthine.

In terms of assembly, homodimer.

Its pathway is purine metabolism; purine nucleotide biosynthesis [regulation]. Is the main repressor of the genes involved in the de novo synthesis of purine nucleotides, regulating purB, purC, purEK, purF, purHD, purL, purMN and guaBA expression. PurR is allosterically activated to bind its cognate DNA by binding the purine corepressors, hypoxanthine or guanine, thereby effecting transcription repression. This Shigella dysenteriae serotype 1 (strain Sd197) protein is HTH-type transcriptional repressor PurR.